A 154-amino-acid polypeptide reads, in one-letter code: tRNA (cytidine(34)-2'-O)-methyltransferase (154 aa).

Residues Leu78, Gly100, Ile122, and Ser130 each contribute to the S-adenosyl-L-methionine site.

This sequence belongs to the class IV-like SAM-binding methyltransferase superfamily. RNA methyltransferase TrmH family. TrmL subfamily. As to quaternary structure, homodimer.

Its subcellular location is the cytoplasm. It carries out the reaction cytidine(34) in tRNA + S-adenosyl-L-methionine = 2'-O-methylcytidine(34) in tRNA + S-adenosyl-L-homocysteine + H(+). It catalyses the reaction 5-carboxymethylaminomethyluridine(34) in tRNA(Leu) + S-adenosyl-L-methionine = 5-carboxymethylaminomethyl-2'-O-methyluridine(34) in tRNA(Leu) + S-adenosyl-L-homocysteine + H(+). Its function is as follows. Methylates the ribose at the nucleotide 34 wobble position in the two leucyl isoacceptors tRNA(Leu)(CmAA) and tRNA(Leu)(cmnm5UmAA). Catalyzes the methyl transfer from S-adenosyl-L-methionine to the 2'-OH of the wobble nucleotide. The protein is tRNA (cytidine(34)-2'-O)-methyltransferase of Saccharophagus degradans (strain 2-40 / ATCC 43961 / DSM 17024).